Consider the following 366-residue polypeptide: D-alanine--D-alanine ligase (366 aa).

An ATP-grasp domain is found at 146–352 (KICFEHAGLQ…YTELINRLIE (207 aa)). 179-234 (EKKLRYPMFVKPANMGSSVGISKAHNRNELIEAIELALAYDRKFLIEKAINAREME) is an ATP binding site. Asp-305, Glu-319, and Asn-321 together coordinate Mg(2+).

Belongs to the D-alanine--D-alanine ligase family. Mg(2+) is required as a cofactor. Mn(2+) serves as cofactor.

It is found in the cytoplasm. The catalysed reaction is 2 D-alanine + ATP = D-alanyl-D-alanine + ADP + phosphate + H(+). The protein operates within cell wall biogenesis; peptidoglycan biosynthesis. In terms of biological role, cell wall formation. In Chloroherpeton thalassium (strain ATCC 35110 / GB-78), this protein is D-alanine--D-alanine ligase.